We begin with the raw amino-acid sequence, 855 residues long: Putative AAA family ATPase R476 (855 aa).

The segment covering 1 to 13 (MNKRDFSELKNSE) has biased composition (basic and acidic residues). The tract at residues 1–37 (MNKRDFSELKNSESSEESSLVSSTETVRSSKRNKKFH) is disordered. Residues 17–27 (ESSLVSSTETV) are compositionally biased toward low complexity. ATP is bound at residue 610-617 (GPPGTGKT).

It belongs to the AAA ATPase family.

The chain is Putative AAA family ATPase R476 from Acanthamoeba polyphaga mimivirus (APMV).